We begin with the raw amino-acid sequence, 275 residues long: Large ribosomal subunit protein uL2c (275 aa).

Disordered regions lie at residues proline 29–arginine 60 and methionine 225–histidine 252. Positions serine 51–arginine 60 are enriched in basic residues.

This sequence belongs to the universal ribosomal protein uL2 family. As to quaternary structure, part of the 50S ribosomal subunit.

Its subcellular location is the plastid. It is found in the chloroplast. The sequence is that of Large ribosomal subunit protein uL2c (rpl2) from Chlorokybus atmophyticus (Soil alga).